The following is a 344-amino-acid chain: L-rhamnose-proton symporter (344 aa).

A run of 10 helical transmembrane segments spans residues 4–24 (AITM…CFYA), 38–58 (WSVG…AILL), 72–92 (TLLP…NYGL), 101–121 (MGIG…TPIL), 137–157 (TLLG…AGQL), 175–195 (LVLA…MNAA), 214–234 (LPSY…FCFI), 259–279 (VLLS…YAWG), 290–310 (MSWM…GLVL), and 321–341 (VGVL…VGLG).

The protein belongs to the L-rhamnose transporter (TC 2.A.7.6) family.

The protein resides in the cell inner membrane. The catalysed reaction is L-rhamnopyranose(in) + H(+)(in) = L-rhamnopyranose(out) + H(+)(out). Functionally, uptake of L-rhamnose across the cytoplasmic membrane with the concomitant transport of protons into the cell (symport system). The protein is L-rhamnose-proton symporter of Enterobacter sp. (strain 638).